Reading from the N-terminus, the 83-residue chain is Normal mucosa of esophagus-specific gene 1 protein (83 aa).

Belongs to the complex I NDUFA4 subunit family. Strongly expressed in vertebrae, brain, intestine and stomach.

The protein localises to the nucleus. This is Normal mucosa of esophagus-specific gene 1 protein (Nmes1) from Mus musculus (Mouse).